A 158-amino-acid polypeptide reads, in one-letter code: Fucolectin (158 aa).

Residues lysine 16–valine 148 form an F5/8 type C-like region. 4 residues coordinate Ca(2+): asparagine 35, aspartate 38, asparagine 40, and serine 49. 3 cysteine pairs are disulfide-bonded: cysteine 50–cysteine 146, cysteine 82–cysteine 83, and cysteine 108–cysteine 124. Alpha-L-fucose is bound by residues histidine 52 and arginine 79. The Cell attachment site signature appears at arginine 79 to aspartate 81. An alpha-L-fucose-binding site is contributed by arginine 86. The Ca(2+) site is built by cysteine 146 and glutamate 147.

Belongs to the fucolectin family. Homotrimer.

Its subcellular location is the secreted. Functionally, acts as a defensive agent. Recognizes blood group fucosylated oligosaccharides including A, B, H and Lewis B-type antigens. Does not recognize Lewis A antigen and has low affinity for monovalent haptens. The sequence is that of Fucolectin from Anguilla anguilla (European freshwater eel).